The primary structure comprises 80 residues: Defensin-like protein 44 (80 aa).

Positions 1–27 (MAITKTSVTLLLLIIMAASLSNFSVLA) are cleaved as a signal peptide. Cystine bridges form between Cys-40–Cys-79, Cys-44–Cys-67, Cys-53–Cys-77, and Cys-57–Cys-78.

It belongs to the DEFL family.

The protein localises to the secreted. The protein is Defensin-like protein 44 of Arabidopsis thaliana (Mouse-ear cress).